Here is a 196-residue protein sequence, read N- to C-terminus: tRNA(Phe) 7-((3-amino-3-carboxypropyl)-4-demethylwyosine(37)-N(4))-methyltransferase 1 (196 aa).

The protein belongs to the TYW3 family.

The enzyme catalyses 4-demethyl-7-[(3S)-3-amino-3-carboxypropyl]wyosine(37) in tRNA(Phe) + S-adenosyl-L-methionine = 7-[(3S)-3-amino-3-carboxypropyl]wyosine(37) in tRNA(Phe) + S-adenosyl-L-homocysteine + H(+). Functionally, S-adenosyl-L-methionine-dependent methyltransferase that acts as a component of the wyosine derivatives biosynthesis pathway. Probably methylates N-4 position of wybutosine-86 to produce wybutosine-72. The protein is tRNA(Phe) 7-((3-amino-3-carboxypropyl)-4-demethylwyosine(37)-N(4))-methyltransferase 1 of Pyrococcus furiosus (strain ATCC 43587 / DSM 3638 / JCM 8422 / Vc1).